The primary structure comprises 1838 residues: Type III effector DspE (1838 aa).

Residues 1–12 (MELKSLGTEHKA) are compositionally biased toward basic and acidic residues. Disordered stretches follow at residues 1–72 (MELK…AAHQ), 86–163 (KKFS…PTQQ), 182–264 (MAHP…VATP), 281–300 (LEGT…LKGS), 398–418 (DGKS…KTML), and 1480–1505 (NLAA…SNNR). The segment covering 27–46 (ALQQGSSSSSPQNAAASLAA) has biased composition (low complexity). Polar residues predominate over residues 91-103 (SAPQGQPGTTHSK). The span at 110 to 120 (LLARDDGETQH) shows a compositional bias: basic and acidic residues. Polar residues predominate over residues 407–418 (GSGTQSHNKTML). Residues 1480–1502 (NLAAGSRERSTTSGQFGSTTSAS) show a composition bias toward low complexity.

The protein belongs to the AvrE family. In terms of assembly, interacts with the chaperone DspF (DspB/F).

It is found in the secreted. The protein localises to the host cell. Its activity is regulated as follows. Polyamidoamine dendrimers inhibit channel and virulence activities. Major virulence factor that may function as a water- and solute-permeable channel dedicated to creating osmotic/water potential perturbation and a water- and nutrient-rich apoplast in which bacteria multiply within the infected plant tissues. Expression in Xenopus oocytes results in inward and outward currents, permeability to water and osmolarity-dependent oocyte swelling and bursting. Its function is as follows. Acts as a major cell-death inducer during fire blight, a necrotic disease affecting plants of the rosaceous family, and during hypersensitive response (HR) on non-host plants. Essential for pathogenicity on host plants. Contributes quantitatively and in a strain-dependent fashion to HR elicitation in non-host plants such as tobacco. Induces cell death in leaves of apple, a host plant, and tobacco, a non-host plant. Also triggers necrosis in the widely used model, non-host, N.benthamiana and in yeast. Required for the transient multiplication and survival of E.amylovora in non-host A.thaliana leaves. In A.thaliana, triggers electrolyte leakage, activation of defense pathways, reactive oxygen species (ROS) accumulation and cell death. The toxicity of DspE in A.thaliana is associated with an early repression of de novo protein synthesis. The protein is Type III effector DspE of Erwinia amylovora (Fire blight bacteria).